Reading from the N-terminus, the 421-residue chain is Type II methyltransferase M.SfiI (421 aa).

This sequence belongs to the N(4)/N(6)-methyltransferase family. N(4) subfamily.

It carries out the reaction a 2'-deoxycytidine in DNA + S-adenosyl-L-methionine = an N(4)-methyl-2'-deoxycytidine in DNA + S-adenosyl-L-homocysteine + H(+). Functionally, a beta subtype methylase, recognizes the double-stranded sequence 5'-GGCCNNNNNGGCC-3', methylates C-? on both strands, and protects the DNA from cleavage by the SfiI endonuclease. The protein is Type II methyltransferase M.SfiI of Streptomyces fimbriatus.